A 1464-amino-acid chain; its full sequence is DNA polymerase III PolC-type (1464 aa).

The 157-residue stretch at Y426–L582 folds into the Exonuclease domain.

This sequence belongs to the DNA polymerase type-C family. PolC subfamily.

It localises to the cytoplasm. It carries out the reaction DNA(n) + a 2'-deoxyribonucleoside 5'-triphosphate = DNA(n+1) + diphosphate. In terms of biological role, required for replicative DNA synthesis. This DNA polymerase also exhibits 3' to 5' exonuclease activity. The protein is DNA polymerase III PolC-type of Streptococcus thermophilus (strain ATCC BAA-250 / LMG 18311).